A 401-amino-acid chain; its full sequence is 26S proteasome regulatory subunit 6A (401 aa).

189–196 (GPPGTGKT) is a binding site for ATP.

It belongs to the AAA ATPase family. As to quaternary structure, the 26S proteasome consists of a 20S proteasome core and two 19S regulatory subunits. The 20S proteasome core is composed of 28 subunits that are arranged in four stacked rings, resulting in a barrel-shaped structure. The two end rings are each formed by seven alpha subunits, and the two central rings are each formed by seven beta subunits. The catalytic chamber with the active sites is on the inside of the barrel.

The protein resides in the cytoplasm. Its subcellular location is the nucleus. Acts as a regulatory subunit of the 26S proteasome which degrades poly-ubiquitinated proteins in the cytoplasm and in the nucleus. It is essential for the regulated turnover of proteins and for the removal of misfolded proteins. The proteasome is a multicatalytic proteinase complex that is characterized by its ability to cleave peptides with Arg, Phe, Tyr, Leu, and Glu adjacent to the leaving group at neutral or slightly basic pH. The chain is 26S proteasome regulatory subunit 6A (RPT5) from Encephalitozoon cuniculi (strain GB-M1) (Microsporidian parasite).